A 164-amino-acid polypeptide reads, in one-letter code: Phosphopantetheine adenylyltransferase (164 aa).

Ser-9 serves as a coordination point for substrate. ATP is bound by residues 9–10 (SF) and His-17. Residues Lys-41, Val-78, and Arg-92 each contribute to the substrate site. ATP-binding positions include 93-95 (GLR), Glu-103, and 128-134 (VRTITAT).

The protein belongs to the bacterial CoaD family. Homohexamer. Mg(2+) is required as a cofactor.

It is found in the cytoplasm. It catalyses the reaction (R)-4'-phosphopantetheine + ATP + H(+) = 3'-dephospho-CoA + diphosphate. The protein operates within cofactor biosynthesis; coenzyme A biosynthesis; CoA from (R)-pantothenate: step 4/5. Its function is as follows. Reversibly transfers an adenylyl group from ATP to 4'-phosphopantetheine, yielding dephospho-CoA (dPCoA) and pyrophosphate. This Brucella suis (strain ATCC 23445 / NCTC 10510) protein is Phosphopantetheine adenylyltransferase.